Reading from the N-terminus, the 244-residue chain is tRNA pseudouridine synthase A (244 aa).

The Nucleophile role is filled by D52. Y110 lines the substrate pocket.

It belongs to the tRNA pseudouridine synthase TruA family. In terms of assembly, homodimer.

The enzyme catalyses uridine(38/39/40) in tRNA = pseudouridine(38/39/40) in tRNA. Functionally, formation of pseudouridine at positions 38, 39 and 40 in the anticodon stem and loop of transfer RNAs. This is tRNA pseudouridine synthase A from Geotalea uraniireducens (strain Rf4) (Geobacter uraniireducens).